Reading from the N-terminus, the 430-residue chain is Pyrroloquinoline quinone-dependent sugar dehydrogenase (430 aa).

Positions 1-23 (MARLAPHTLLLALFVFLFGSCTA) are cleaved as a signal peptide. N25 is a glycosylation site (N-linked (GlcNAc...) asparagine). R57 contributes to the pyrroloquinoline quinone binding site. N-linked (GlcNAc...) asparagine glycosylation is found at N94 and N147. H153 contributes to the pyrroloquinoline quinone binding site. The N-linked (GlcNAc...) asparagine glycan is linked to N184. Position 220 (R220) interacts with pyrroloquinoline quinone. Ca(2+) contacts are provided by S240 and D242. A disulfide bridge connects residues C281 and C316. N-linked (GlcNAc...) asparagine glycosylation is present at N306. Position 330 (H330) interacts with pyrroloquinoline quinone. N-linked (GlcNAc...) asparagine glycosylation is present at N341. H350 is a pyrroloquinoline quinone binding site. C388 and C392 form a disulfide bridge.

The protein belongs to the sugar dehydrogenase AA12 family. Ca(2+) is required as a cofactor. The cofactor is pyrroloquinoline quinone.

It localises to the secreted. Pyrroloquinoline quinone (PPQ)-dependent oxidoreductase that catalyzes the oxidation of various sugars such as L-fucose. The sequence is that of Pyrroloquinoline quinone-dependent sugar dehydrogenase from Hypocrea jecorina (strain QM6a) (Trichoderma reesei).